Consider the following 62-residue polypeptide: MELSFTKILVILFVGFLVFGPDKLPALGRAAGKALSEFKQATSGLTQDIRKNDSENKEDKQM.

The chain crosses the membrane as a helical span at residues 8-28 (ILVILFVGFLVFGPDKLPALG).

It belongs to the TatA/E family. In terms of assembly, forms a complex with TatC.

The protein localises to the cell membrane. Its function is as follows. Part of the twin-arginine translocation (Tat) system that transports large folded proteins containing a characteristic twin-arginine motif in their signal peptide across membranes. TatA could form the protein-conducting channel of the Tat system. The sequence is that of Sec-independent protein translocase protein TatAc from Bacillus subtilis (strain 168).